The chain runs to 269 residues: Indole-3-glycerol phosphate synthase (269 aa).

This sequence belongs to the TrpC family.

It carries out the reaction 1-(2-carboxyphenylamino)-1-deoxy-D-ribulose 5-phosphate + H(+) = (1S,2R)-1-C-(indol-3-yl)glycerol 3-phosphate + CO2 + H2O. Its pathway is amino-acid biosynthesis; L-tryptophan biosynthesis; L-tryptophan from chorismate: step 4/5. The polypeptide is Indole-3-glycerol phosphate synthase (Streptomyces griseus subsp. griseus (strain JCM 4626 / CBS 651.72 / NBRC 13350 / KCC S-0626 / ISP 5235)).